The following is a 115-amino-acid chain: Ribonuclease P protein component (115 aa).

Belongs to the RnpA family. As to quaternary structure, consists of a catalytic RNA component (M1 or rnpB) and a protein subunit.

It carries out the reaction Endonucleolytic cleavage of RNA, removing 5'-extranucleotides from tRNA precursor.. In terms of biological role, RNaseP catalyzes the removal of the 5'-leader sequence from pre-tRNA to produce the mature 5'-terminus. It can also cleave other RNA substrates such as 4.5S RNA. The protein component plays an auxiliary but essential role in vivo by binding to the 5'-leader sequence and broadening the substrate specificity of the ribozyme. This chain is Ribonuclease P protein component, found in Bacillus mycoides (strain KBAB4) (Bacillus weihenstephanensis).